Reading from the N-terminus, the 484-residue chain is UDP-glycosyltransferase 73B4 (484 aa).

H18 (proton acceptor) is an active-site residue. An anthocyanidin is bound by residues H18 and N89. D129 serves as the catalytic Charge relay. Residues A356, Q358, H373, W376, N377, S378, and E381 each contribute to the UDP-alpha-D-glucose site. A396 contributes to the an anthocyanidin binding site. UDP-alpha-D-glucose-binding residues include E397 and Q398.

The protein belongs to the UDP-glycosyltransferase family. In terms of tissue distribution, specifically expressed in roots.

The catalysed reaction is a flavonol + UDP-alpha-D-glucose = a flavonol 3-O-beta-D-glucoside + UDP + H(+). Functionally, possesses quercetin 3-O-glucosyltransferase and low 7-O-glucosyltransferase activities in vitro. Also active in vitro on benzoates and benzoate derivatives. Can detoxify the explosive 2,4,6-trinitrotoluene in plant by forming O- or C-glucose conjugates. The chain is UDP-glycosyltransferase 73B4 (UGT73B4) from Arabidopsis thaliana (Mouse-ear cress).